Consider the following 276-residue polypeptide: Glucosamine-6-phosphate deaminase 2 (276 aa).

Catalysis depends on Asp72, which acts as the Proton acceptor; for enolization step. Positions 105-130 (HILDGNAADLQAECDAFENKIKEAGG) form a coiled coil. The For ring-opening step role is filled by Asp141. His143 functions as the Proton acceptor; for ring-opening step in the catalytic mechanism. Glu148 functions as the For ring-opening step in the catalytic mechanism. Thr161 carries the phosphothreonine modification.

It belongs to the glucosamine/galactosamine-6-phosphate isomerase family. Homohexamer. As to expression, ubiquitous, with highest expression detected in testis, ovary, placenta, and heart.

It is found in the cytoplasm. It catalyses the reaction alpha-D-glucosamine 6-phosphate + H2O = beta-D-fructose 6-phosphate + NH4(+). The protein operates within nucleotide-sugar biosynthesis; UDP-N-acetyl-alpha-D-glucosamine biosynthesis; alpha-D-glucosamine 6-phosphate from D-fructose 6-phosphate: step 1/1. With respect to regulation, allosterically activated by N-acetylglucosamine-6-phosphate (GlcNAc6P). Catalyzes the reversible conversion of alpha-D-glucosamine 6-phosphate (GlcN-6P) into beta-D-fructose 6-phosphate (Fru-6P) and ammonium ion, a regulatory reaction step in de novo uridine diphosphate-N-acetyl-alpha-D-glucosamine (UDP-GlcNAc) biosynthesis via hexosamine pathway. Deamination is coupled to aldo-keto isomerization mediating the metabolic flux from UDP-GlcNAc toward Fru-6P. At high ammonium level can drive amination and isomerization of Fru-6P toward hexosamines and UDP-GlcNAc synthesis. Has a role in fine tuning the metabolic fluctuations of cytosolic UDP-GlcNAc and their effects on hyaluronan synthesis that occur during tissue remodeling. In Homo sapiens (Human), this protein is Glucosamine-6-phosphate deaminase 2.